Here is a 99-residue protein sequence, read N- to C-terminus: Cell division protein FtsB (99 aa).

The Cytoplasmic segment spans residues 1 to 3 (MKF). Residues 4–21 (FVIALIVLLGLLQYRLWS) form a helical membrane-spanning segment. Over 22–99 (GDNSLPEYFV…GDRSVSSPSQ (78 aa)) the chain is Periplasmic. Residues 31-73 (VLQKQIAAQQEGNAKLNERNQVLKEEIIDLKSGTEAIEERARN) are a coiled coil.

This sequence belongs to the FtsB family. As to quaternary structure, part of a complex composed of FtsB, FtsL and FtsQ.

It is found in the cell inner membrane. Essential cell division protein. May link together the upstream cell division proteins, which are predominantly cytoplasmic, with the downstream cell division proteins, which are predominantly periplasmic. The polypeptide is Cell division protein FtsB (Shewanella sp. (strain ANA-3)).